The chain runs to 320 residues: Ferrochelatase (320 aa).

Fe cation contacts are provided by His194 and Glu272.

Belongs to the ferrochelatase family.

Its subcellular location is the cytoplasm. The catalysed reaction is heme b + 2 H(+) = protoporphyrin IX + Fe(2+). Its pathway is porphyrin-containing compound metabolism; protoheme biosynthesis; protoheme from protoporphyrin-IX: step 1/1. In terms of biological role, catalyzes the ferrous insertion into protoporphyrin IX. This is Ferrochelatase from Desulfotalea psychrophila (strain LSv54 / DSM 12343).